Reading from the N-terminus, the 471-residue chain is Ribosomal protein uS12 methylthiotransferase RimO (471 aa).

The MTTase N-terminal domain maps to 19–134 (PRVGFVSLGC…VMNAVHTHLP (116 aa)). 6 residues coordinate [4Fe-4S] cluster: Cys-28, Cys-64, Cys-93, Cys-169, Cys-173, and Cys-176. The Radical SAM core domain occupies 155 to 396 (LTPRHYAYLK…MAVAEEVSTA (242 aa)). The 73-residue stretch at 399-471 (QKRVGQTMQV…QGHDLVGQPV (73 aa)) folds into the TRAM domain.

Belongs to the methylthiotransferase family. RimO subfamily. It depends on [4Fe-4S] cluster as a cofactor.

It localises to the cytoplasm. The enzyme catalyses L-aspartate(89)-[ribosomal protein uS12]-hydrogen + (sulfur carrier)-SH + AH2 + 2 S-adenosyl-L-methionine = 3-methylsulfanyl-L-aspartate(89)-[ribosomal protein uS12]-hydrogen + (sulfur carrier)-H + 5'-deoxyadenosine + L-methionine + A + S-adenosyl-L-homocysteine + 2 H(+). Catalyzes the methylthiolation of an aspartic acid residue of ribosomal protein uS12. The protein is Ribosomal protein uS12 methylthiotransferase RimO of Delftia acidovorans (strain DSM 14801 / SPH-1).